Reading from the N-terminus, the 428-residue chain is D-amino acid dehydrogenase (428 aa).

Residue 3–17 coordinates FAD; sequence VVVLGSGVVGVTSAY.

It belongs to the DadA oxidoreductase family. FAD serves as cofactor.

The enzyme catalyses a D-alpha-amino acid + A + H2O = a 2-oxocarboxylate + AH2 + NH4(+). It functions in the pathway amino-acid degradation; D-alanine degradation; NH(3) and pyruvate from D-alanine: step 1/1. In terms of biological role, oxidative deamination of D-amino acids. In Paraburkholderia phytofirmans (strain DSM 17436 / LMG 22146 / PsJN) (Burkholderia phytofirmans), this protein is D-amino acid dehydrogenase.